The chain runs to 245 residues: Protein FAM133B (245 aa).

2 disordered regions span residues 19–38 and 69–245; these read SRGP…NRPR and WKKE…SDSP. Basic and acidic residues predominate over residues 69-80; the sequence is WKKELEKHREKL. S82 is subject to Phosphoserine. Basic residues predominate over residues 89 to 102; sequence KKRQKKKKEKKKSG. The segment covering 103–119 has biased composition (low complexity); the sequence is RYSSSSSSSSDSSSSSS. The span at 128–140 shows a compositional bias: basic residues; it reads QTKRRKKKKSHCH. Positions 165-176 are enriched in basic and acidic residues; sequence KDITEREKDTKG. Residues S190, S191, S193, and S195 each carry the phosphoserine modification. Basic and acidic residues predominate over residues 209–219; it reads SGEERERTTDK. Over residues 220-237 the composition is skewed to basic residues; that stretch reads AKKRRKHKKHSKKKKKKA.

Belongs to the FAM133 family.

The polypeptide is Protein FAM133B (Fam133b) (Rattus norvegicus (Rat)).